Reading from the N-terminus, the 317-residue chain is tRNA-dihydrouridine(20a/20b) synthase [NAD(P)+]-like (317 aa).

FMN is bound by residues 33–35 and Gln87; that span reads PMV. The active-site Proton donor is Cys116. FMN-binding positions include Lys158, His186, 216-218, and 240-241; these read NGD and AR.

Belongs to the Dus family. Dus4 subfamily. FMN is required as a cofactor.

It carries out the reaction 5,6-dihydrouridine(20a) in tRNA + NADP(+) = uridine(20a) in tRNA + NADPH + H(+). It catalyses the reaction 5,6-dihydrouridine(20a) in tRNA + NAD(+) = uridine(20a) in tRNA + NADH + H(+). The enzyme catalyses 5,6-dihydrouridine(20b) in tRNA + NAD(+) = uridine(20b) in tRNA + NADH + H(+). The catalysed reaction is 5,6-dihydrouridine(20b) in tRNA + NADP(+) = uridine(20b) in tRNA + NADPH + H(+). Catalyzes the synthesis of dihydrouridine, a modified base found in the D-loop of most tRNAs. The polypeptide is tRNA-dihydrouridine(20a/20b) synthase [NAD(P)+]-like (DUS4L) (Homo sapiens (Human)).